A 32-amino-acid chain; its full sequence is Photosystem I reaction center subunit XII (32 aa).

A helical membrane pass occupies residues 9-28 (VYIALVVALIPGLLAWRLAT).

It belongs to the PsaM family.

Its subcellular location is the cellular thylakoid membrane. In Nostoc sp. (strain PCC 7120 / SAG 25.82 / UTEX 2576), this protein is Photosystem I reaction center subunit XII.